A 749-amino-acid chain; its full sequence is MIKNYGDRYHLIDKKALEDKKLDKDQLVEFVRTSGISDIGKNYNIVSIIGSQSTGKSTLLNQLFGTKFDVQNRQQSVGQTTVGIWLSKDVQNNVVVLDVEGSDSVERKSGENMVENQTALMALAMSHCFIINVFLNALGQHTSCQLSIIKIIMQQNLKLFQQDTVKHIIFVVRDWDEDANYEEASRRLNGYLLNIWNEIPKPDHYKETDFHQLFSVQVVTLVYYKMKKEFIEQTNDLHAKLSNQQDPNFIFKDFDYEKNVRWSDMPQYLSNIWEVISNNKDLNLPNEKILISNMRCQQIKLEALDGVKQLNEDLQNRVRTKLVDNFAQECQTIMNLAFKLYDKDARDYHIEVYKEKEKELKDELVNRFYTYFQKQTEQLKQHYMNTLTENLETLKRESIYNLPDKLNELDLFKLQFEEQLAKSVIQKGLWQEEDHIRYFRQQFDNQLKAFVEAQLATFKQQLDNIIKSECDKIVSSQVLNISSKFWQQIESDYYAMISEKYQKYEVLLTGLRVQQKQIEDYLNKFEEDSFHNLKQVIAVASGRFKDQLFQQFKAQFVRAPDGQPRNWQKLTEEEIFHCYTDARDKVFQLLDSLRIRKIKFIRQQVVLKKKAQTLIISSSQKVQYQISSDADSDDVVLNDVFYTQVKMQLAEDIDVQYQDAIQKHKQDFLQNIPKPFWFLLLFFMYDDVLRWMGNPLFLYPILIILCFVGFCIAIGLHSLPKLAFQWVFRTLNQAVIPIIFGGISKLKGS.

The Cytoplasmic portion of the chain corresponds to 1-671; that stretch reads MIKNYGDRYH…QKHKQDFLQN (671 aa). A GB1/RHD3-type G domain is found at 40–265; sequence GKNYNIVSII…YEKNVRWSDM (226 aa). Residue 50–57 participates in GTP binding; sequence GSQSTGKS. The stretch at 445–465 forms a coiled coil; it reads NQLKAFVEAQLATFKQQLDNI. A helical membrane pass occupies residues 672-692; sequence IPKPFWFLLLFFMYDDVLRWM. Residues 693–695 are Lumenal-facing; that stretch reads GNP. Residues 696-716 form a helical membrane-spanning segment; sequence LFLYPILIILCFVGFCIAIGL. The Cytoplasmic segment spans residues 717–749; the sequence is HSLPKLAFQWVFRTLNQAVIPIIFGGISKLKGS.

The protein belongs to the TRAFAC class dynamin-like GTPase superfamily. GB1/RHD3 GTPase family. RHD3 subfamily.

The protein resides in the endoplasmic reticulum membrane. Functionally, probable GTP-binding protein that may be involved in cell development. The polypeptide is Protein SEY1 homolog 2 (Paramecium tetraurelia).